The chain runs to 136 residues: Congerin-2 (136 aa).

Position 2 is an N-acetylserine (serine 2). In terms of domain architecture, Galectin spans 4 to 136 (RAEVRNIPFK…DARLTFVRLE (133 aa)). 70-76 (WQQEERS) contacts a beta-D-galactoside.

As to quaternary structure, homodimer.

Its function is as follows. This protein binds beta-galactoside. Its physiological function is not yet known. The sequence is that of Congerin-2 from Conger myriaster (Conger eel).